Consider the following 94-residue polypeptide: Progonadoliberin-3 (94 aa).

A signal peptide spans 1 to 23 (MEGKGRVLVQLLMLACVLEVSLC). Q24 is subject to Pyrrolidone carboxylic acid. A Glycine amide modification is found at G33.

Belongs to the GnRH family.

It is found in the secreted. Functionally, stimulates the secretion of gonadotropins. The protein is Progonadoliberin-3 (gnrh3) of Carassius auratus (Goldfish).